A 315-amino-acid chain; its full sequence is Neurogenic differentiation factor 4 (315 aa).

A disordered region spans residues 39–71; it reads ERGSIDGEEDDEEEEDGEKPKKRGPKKKKMTKA. Acidic residues predominate over residues 44–55; that stretch reads DGEEDDEEEEDG. The segment covering 58-70 has biased composition (basic residues); it reads PKKRGPKKKKMTK. One can recognise a bHLH domain in the interval 78–130; that stretch reads VRRVKANARERSRMHGLNDALENLRRVMPCYSKTQKLSKIETLRLARNYIWAL. S89 is modified (phosphoserine).

As to quaternary structure, efficient DNA binding requires dimerization with another bHLH protein. Forms a heterodimer with the bHLH protein hes2, and weakly interacts with hey1/hrt1. Serine or threonine phosphorylation within the basic region may regulate neurogenic activity. First expressed weakly at stage 12 in primary neuronal precursors. At stages 18 and 21, strongly expressed in the cranial ganglions, with weaker expression remaining in the spinal cord. Later, strongly expressed at sites of neuronal differentiation, namely the eye, forebrain and cranial ganglions.

It localises to the nucleus. Its function is as follows. Probably acts as a transcriptional activator. Mediates neuronal differentiation. Required for the regulation of amacrine cell fate specification in the retina. The chain is Neurogenic differentiation factor 4 (neurod4) from Xenopus laevis (African clawed frog).